The primary structure comprises 342 residues: S-adenosylmethionine:tRNA ribosyltransferase-isomerase (342 aa).

Belongs to the QueA family. In terms of assembly, monomer.

The protein resides in the cytoplasm. It carries out the reaction 7-aminomethyl-7-carbaguanosine(34) in tRNA + S-adenosyl-L-methionine = epoxyqueuosine(34) in tRNA + adenine + L-methionine + 2 H(+). It functions in the pathway tRNA modification; tRNA-queuosine biosynthesis. In terms of biological role, transfers and isomerizes the ribose moiety from AdoMet to the 7-aminomethyl group of 7-deazaguanine (preQ1-tRNA) to give epoxyqueuosine (oQ-tRNA). This is S-adenosylmethionine:tRNA ribosyltransferase-isomerase from Streptococcus agalactiae serotype III (strain NEM316).